The primary structure comprises 115 residues: Large ribosomal subunit protein bL19 (115 aa).

It belongs to the bacterial ribosomal protein bL19 family.

Functionally, this protein is located at the 30S-50S ribosomal subunit interface and may play a role in the structure and function of the aminoacyl-tRNA binding site. The sequence is that of Large ribosomal subunit protein bL19 from Lactobacillus delbrueckii subsp. bulgaricus (strain ATCC BAA-365 / Lb-18).